A 155-amino-acid polypeptide reads, in one-letter code: Small ribosomal subunit protein uS7c (155 aa).

It belongs to the universal ribosomal protein uS7 family. In terms of assembly, part of the 30S ribosomal subunit.

It localises to the plastid. The protein resides in the chloroplast. Its function is as follows. One of the primary rRNA binding proteins, it binds directly to 16S rRNA where it nucleates assembly of the head domain of the 30S subunit. The protein is Small ribosomal subunit protein uS7c (rps7) of Euonymus alatus (Burning bush).